Reading from the N-terminus, the 444-residue chain is Endoglucanase N (444 aa).

A signal peptide spans 1 to 31; the sequence is MWMRRNQIVRKLTLGVVTTVLGMSLSFSALS. Substrate-binding positions include histidine 64, 68-69, tyrosine 95, and histidine 130; that span reads WF. Catalysis depends on glutamate 168, which acts as the Proton donor. Tyrosine 230 lines the substrate pocket. Glutamate 256 functions as the Nucleophile in the catalytic mechanism. Substrate is bound by residues 262–263, tryptophan 290, and 295–297; these read AS and KSE. The interval 332–358 is disordered; it reads ANLGGGDTPTTPTTPTEPTNPGNGTTG. Residues 339 to 358 are compositionally biased toward low complexity; it reads TPTTPTTPTEPTNPGNGTTG. The 89-residue stretch at 356 to 444 folds into the CBM3 domain; the sequence is TTGDVVLQYR…DKANRYVLVT (89 aa).

This sequence belongs to the glycosyl hydrolase 5 (cellulase A) family.

It localises to the secreted. The catalysed reaction is Endohydrolysis of (1-&gt;4)-beta-D-glucosidic linkages in cellulose, lichenin and cereal beta-D-glucans.. The sequence is that of Endoglucanase N (celN) from Pectobacterium atrosepticum (Erwinia carotovora subsp. atroseptica).